The sequence spans 215 residues: Pyridoxine/pyridoxamine 5'-phosphate oxidase (215 aa).

Substrate-binding positions include 9-12 and K69; that span reads RRDY. FMN contacts are provided by residues 64–69, 79–80, K86, and Q108; these read RVLLLK and FT. Substrate contacts are provided by Y126, R130, and S134. FMN-binding positions include 143-144 and W188; that span reads QS. 194–196 contacts substrate; it reads RLH. An FMN-binding site is contributed by R198.

The protein belongs to the pyridoxamine 5'-phosphate oxidase family. In terms of assembly, homodimer. It depends on FMN as a cofactor.

The catalysed reaction is pyridoxamine 5'-phosphate + O2 + H2O = pyridoxal 5'-phosphate + H2O2 + NH4(+). The enzyme catalyses pyridoxine 5'-phosphate + O2 = pyridoxal 5'-phosphate + H2O2. It participates in cofactor metabolism; pyridoxal 5'-phosphate salvage; pyridoxal 5'-phosphate from pyridoxamine 5'-phosphate: step 1/1. Its pathway is cofactor metabolism; pyridoxal 5'-phosphate salvage; pyridoxal 5'-phosphate from pyridoxine 5'-phosphate: step 1/1. Functionally, catalyzes the oxidation of either pyridoxine 5'-phosphate (PNP) or pyridoxamine 5'-phosphate (PMP) into pyridoxal 5'-phosphate (PLP). In Pseudomonas syringae pv. syringae (strain B728a), this protein is Pyridoxine/pyridoxamine 5'-phosphate oxidase.